Consider the following 78-residue polypeptide: DNA import protein CedA1 (78 aa).

The next 2 membrane-spanning stretches (helical) occupy residues 12–32 and 53–73; these read STVT…GWAL and AIIA…ISYI.

Forms a complex composed of CedA, CedA1 and CedA2.

It is found in the cell membrane. Its function is as follows. Part of the Ced system, which is involved in DNA import. The sequence is that of DNA import protein CedA1 from Sulfolobus acidocaldarius (strain ATCC 33909 / DSM 639 / JCM 8929 / NBRC 15157 / NCIMB 11770).